We begin with the raw amino-acid sequence, 130 residues long: Fumarate reductase subunit C (130 aa).

3 helical membrane-spanning segments follow: residues 30-50, 60-80, and 110-130; these read EGTS…VFSL, FVSF…LFAA, and IKAL…VALL.

It belongs to the FrdC family. Part of an enzyme complex containing four subunits: a flavoprotein (FrdA), an iron-sulfur protein (FrdB), and two hydrophobic anchor proteins (FrdC and FrdD).

The protein resides in the cell inner membrane. Functionally, two distinct, membrane-bound, FAD-containing enzymes are responsible for the catalysis of fumarate and succinate interconversion; fumarate reductase is used in anaerobic growth, and succinate dehydrogenase is used in aerobic growth. Anchors the catalytic components of the fumarate reductase complex to the cell inner membrane, binds quinones. The sequence is that of Fumarate reductase subunit C from Yersinia pestis bv. Antiqua (strain Angola).